Here is a 151-residue protein sequence, read N- to C-terminus: UPF0178 protein YaiI (151 aa).

It belongs to the UPF0178 family.

This Salmonella paratyphi B (strain ATCC BAA-1250 / SPB7) protein is UPF0178 protein YaiI.